A 425-amino-acid polypeptide reads, in one-letter code: Dihydroorotase (425 aa).

H56 and H58 together coordinate Zn(2+). Substrate-binding positions include H58 to R60 and N90. Positions 148, 175, and 228 each coordinate Zn(2+). Position 274 (N274) interacts with substrate. Residue D301 coordinates Zn(2+). D301 is a catalytic residue. Substrate is bound by residues H305 and F319–G320.

The protein belongs to the metallo-dependent hydrolases superfamily. DHOase family. Class I DHOase subfamily. Zn(2+) is required as a cofactor.

It catalyses the reaction (S)-dihydroorotate + H2O = N-carbamoyl-L-aspartate + H(+). It functions in the pathway pyrimidine metabolism; UMP biosynthesis via de novo pathway; (S)-dihydroorotate from bicarbonate: step 3/3. Catalyzes the reversible cyclization of carbamoyl aspartate to dihydroorotate. In Lactobacillus johnsonii (strain CNCM I-12250 / La1 / NCC 533), this protein is Dihydroorotase.